The following is a 207-amino-acid chain: Outer-membrane lipoprotein LolB (207 aa).

The first 23 residues, 1-23 (MPTMNRSRRLALLCLGAPLLLAA), serve as a signal peptide directing secretion. Cysteine 24 is lipidated: N-palmitoyl cysteine. The S-diacylglycerol cysteine moiety is linked to residue cysteine 24. A disordered region spans residues 171–207 (PSASQAPAPRPRRIDLEREGGPTPLAVKLVIDPEEAP).

The protein belongs to the LolB family. In terms of assembly, monomer.

It localises to the cell outer membrane. Functionally, plays a critical role in the incorporation of lipoproteins in the outer membrane after they are released by the LolA protein. In Cupriavidus pinatubonensis (strain JMP 134 / LMG 1197) (Cupriavidus necator (strain JMP 134)), this protein is Outer-membrane lipoprotein LolB.